The primary structure comprises 127 residues: uncharacterized protein (127 aa).

This is an uncharacterized protein from Methanocaldococcus jannaschii (strain ATCC 43067 / DSM 2661 / JAL-1 / JCM 10045 / NBRC 100440) (Methanococcus jannaschii).